The sequence spans 218 residues: Ornithine decarboxylase antizyme 2 (218 aa).

This sequence belongs to the ODC antizyme family. Interacts with ODC1 and thereby sterically blocks ODC homodimerization. In terms of tissue distribution, expressed ubiquitously in 24 hours embryos, with highest levels in telencephalon, lens, retina, cerebellum and hindbrain primordia.

Functionally, ornithine decarboxylase (ODC) antizyme protein that negatively regulates ODC activity and intracellular polyamine biosynthesis and uptake in response to increased intracellular polyamine levels. Binds to ODC monomers, inhibiting the assembly of the functional ODC homodimers. Does not target the ODC monomers for degradation, which allows a protein synthesis-independent restoration of ODC activity. In Danio rerio (Zebrafish), this protein is Ornithine decarboxylase antizyme 2 (oaz1b).